We begin with the raw amino-acid sequence, 127 residues long: Large ribosomal subunit protein bL17 (127 aa).

It belongs to the bacterial ribosomal protein bL17 family. As to quaternary structure, part of the 50S ribosomal subunit. Contacts protein L32.

The chain is Large ribosomal subunit protein bL17 from Xanthomonas axonopodis pv. citri (strain 306).